The primary structure comprises 360 residues: Squamosa promoter-binding-like protein 7 (360 aa).

Gly residues predominate over residues 74–89 (AQGSGGGGGGGGGGSA). The segment at 74–98 (AQGSGGGGGGGGGGSADQGKRKEKA) is disordered. The SBP-type zinc-finger motif lies at 105–182 (VPRCQVEGCD…AGHNERRRRS (78 aa)). Zn(2+) contacts are provided by cysteine 108, cysteine 113, cysteine 130, histidine 133, cysteine 149, cysteine 152, histidine 156, and cysteine 168. The Bipartite nuclear localization signal signature appears at 165-181 (KKSCRRRLAGHNERRRR). Over residues 172–182 (LAGHNERRRRS) the composition is skewed to basic residues. 3 disordered regions span residues 172–196 (LAGH…AHPH), 261–306 (FFSD…HEHQ), and 320–360 (AAGG…ARVV).

As to expression, expressed in young panicles.

The protein localises to the nucleus. Its function is as follows. Trans-acting factor that binds specifically to the consensus nucleotide sequence 5'-TNCGTACAA-3'. May be involved in panicle development. This chain is Squamosa promoter-binding-like protein 7 (SPL7), found in Oryza sativa subsp. indica (Rice).